The sequence spans 409 residues: LIM/homeobox protein ttx-3 (409 aa).

LIM zinc-binding domains lie at 108–169 and 171–232; these read NQCC…RYQK and CRKC…VRST. Disordered regions lie at residues 245–299 and 372–409; these read AVVA…RTSF and MNPP…YTHL. The span at 247 to 267 shows a compositional bias: pro residues; the sequence is VAPPPPPPTTTTAPPPAAPEQ. The segment at residues 292 to 351 is a DNA-binding region (homeobox); it reads SKRMRTSFKHHQLRAMKTYFALNHNPDAKDLKQLAAKTNLTKRVLQVWFQNARAKYRREL. A compositionally biased stretch (polar residues) spans 382 to 409; the sequence is GHSTDGYQLNTPPLSSEIYSPNSNYTHL.

As to expression, expressed in the AIA, AIN and AIY interneurons, and in the NSM neurons. Expressed also in ADL and ASI sensory neurons in 60-70% of L2 larvae. Expression is also detected in head muscles of embryos and some early larvae but not late larvae or adults.

Its subcellular location is the nucleus. It localises to the perikaryon. It is found in the cell projection. The protein localises to the axon. Transcription factor. Binds to a sequence motif, 5'-TTATTGGCTTCGTTAA-3', which may be involved in AIY interneuron function, in the regulatory elements of target genes; binding is more efficient, in vitro, together with homeobox protein ceh-10. Required for specification of the AIA and AIY interneurons and the NSM neurons. Positively regulates the expression of a number of genes including ceh-10, ceh-23, kal-1, hen-1, ser-2, unc-17 and sra-11 in AIY neurons, and cat-4, flp-4, bas-1, ptps-1 and mgl-1 in NSM neurons. In concert with WNT/beta-catenin signaling, initiates expression of homeobox ceh-10 in AIY, but not in the sister cells, SMDD motor neurons. Also acts in an autoregulatory feedback loop to maintain its own expression. Plays a role in the thermotactic response, olfactory imprinting, regulation of longevity, control of dauer formation and axon outgrowth and pathfinding. Not required for normal chemosensory behavior. This chain is LIM/homeobox protein ttx-3, found in Caenorhabditis elegans.